The sequence spans 229 residues: Potassium/proton antiporter CemA (229 aa).

Transmembrane regions (helical) follow at residues 7–27, 114–134, and 189–209; these read FTPL…SFSF, LICF…LVIL, and ILSG…KYWI.

Belongs to the CemA family.

Its subcellular location is the plastid. The protein localises to the chloroplast inner membrane. It catalyses the reaction K(+)(in) + H(+)(out) = K(+)(out) + H(+)(in). Functionally, contributes to K(+)/H(+) antiport activity by supporting proton efflux to control proton extrusion and homeostasis in chloroplasts in a light-dependent manner to modulate photosynthesis. Prevents excessive induction of non-photochemical quenching (NPQ) under continuous-light conditions. Indirectly promotes efficient inorganic carbon uptake into chloroplasts. The sequence is that of Potassium/proton antiporter CemA from Ipomoea purpurea (Common morning glory).